The following is a 162-amino-acid chain: Nucleotide-binding protein CHU_2278 (162 aa).

This sequence belongs to the YajQ family.

In terms of biological role, nucleotide-binding protein. The protein is Nucleotide-binding protein CHU_2278 of Cytophaga hutchinsonii (strain ATCC 33406 / DSM 1761 / CIP 103989 / NBRC 15051 / NCIMB 9469 / D465).